A 156-amino-acid polypeptide reads, in one-letter code: SCP2 sterol-binding domain-containing protein 1 (156 aa).

The SCP2 domain occupies 44 to 156 (TVPVFEDISQ…ERVFKDWAKW (113 aa)).

This is SCP2 sterol-binding domain-containing protein 1 (SCP2D1) from Bos taurus (Bovine).